A 61-amino-acid polypeptide reads, in one-letter code: Lens epithelial cell protein LEP503 (61 aa).

Preferentially expressed in the lens epithelial cells.

This Rattus norvegicus (Rat) protein is Lens epithelial cell protein LEP503 (Lenep).